The chain runs to 29 residues: Potassium channel toxin alpha-KTx 3.15 (29 aa).

Cys-8 and Cys-27 are disulfide-bonded.

This sequence belongs to the short scorpion toxin superfamily. Potassium channel inhibitor family. Alpha-KTx 03 subfamily. In terms of tissue distribution, expressed by the venom gland.

It is found in the secreted. May play a role in blocking voltage-gated potassium channels Kv1.1/KCNA1, Kv1.3/KCNA3 and Kv1.6/KCNA6. This chain is Potassium channel toxin alpha-KTx 3.15, found in Mesobuthus gibbosus (Mediterranean checkered scorpion).